Consider the following 633-residue polypeptide: Probably inactive receptor-like protein kinase At2g46850 (633 aa).

Residues 1 to 28 (MPPLFLPSSSSALFLLLLLLLTLQTLTS) form the signal peptide. Residues 29 to 285 (ISLSQPQALR…IKKHNGKKLT (257 aa)) lie on the Extracellular side of the membrane. Asparagine 45, asparagine 69, and asparagine 231 each carry an N-linked (GlcNAc...) asparagine glycan. A helical transmembrane segment spans residues 286-306 (VLAGVLAPLFILGSLLALFCL). Residues 307 to 633 (LKRPVTSHKD…SPDSIYLPKT (327 aa)) lie on the Cytoplasmic side of the membrane. The 279-residue stretch at 355–633 (FQDSQKLTQG…SPDSIYLPKT (279 aa)) folds into the Protein kinase domain. ATP contacts are provided by residues 361-369 (LTQGKTGTI) and lysine 384.

The protein belongs to the protein kinase superfamily. Ser/Thr protein kinase family.

It localises to the membrane. In Arabidopsis thaliana (Mouse-ear cress), this protein is Probably inactive receptor-like protein kinase At2g46850.